The chain runs to 72 residues: Hirudin variant-2 (72 aa).

Positions 1–7 (AICVSQA) are cleaved as a signal peptide. Residues 8–10 (ITY) form an interaction with thrombin active site region. Intrachain disulfides connect Cys-13–Cys-21, Cys-23–Cys-35, and Cys-29–Cys-46. The disordered stretch occupies residues 47-72 (VTGEGTPNPESHNNGDFEEIPEEYLQ). Thr-52 carries O-linked (GalNAc...) threonine glycosylation. Positions 62–72 (DFEEIPEEYLQ) are interaction with fibrinogen-binding exosite of thrombin. The segment covering 62-72 (DFEEIPEEYLQ) has biased composition (acidic residues). Residue Tyr-70 is modified to Sulfotyrosine.

Belongs to the protease inhibitor I14 (hirudin) family.

It is found in the secreted. Functionally, hirudin is a potent thrombin-specific protease inhibitor. It forms a stable non-covalent complex with alpha-thrombin, thereby abolishing its ability to cleave fibrinogen. In Hirudo medicinalis (Medicinal leech), this protein is Hirudin variant-2.